The chain runs to 711 residues: Transferrin-binding protein B (711 aa).

The first 20 residues, 1–20 (MNNPLVNQAAMVLPVFLLSA), serve as a signal peptide directing secretion. The N-palmitoyl cysteine moiety is linked to residue C21. The S-diacylglycerol cysteine moiety is linked to residue C21. Disordered stretches follow at residues 33-58 (VDTE…QKDQ), 79-105 (SEVK…KRQK), 118-146 (DIYS…KNQA), 225-251 (SKKQ…ESTL), 370-396 (LENG…SENS), 437-492 (PKDS…GDTN), and 682-711 (TEKA…QPVQ). A compositionally biased stretch (polar residues) spans 46–56 (DVSSEKPQAQK). Over residues 96–105 (KPKELPKRQK) the composition is skewed to basic and acidic residues. The segment covering 119–146 (IYSSPYLTPSNHQNGSAGNGVNQPKNQA) has biased composition (polar residues). Residues 373 to 393 (GAAASGSTGAAASGGAAGTSS) are compositionally biased toward low complexity. The span at 457-472 (FTRKFEHTPESDKKDA) shows a compositional bias: basic and acidic residues. Polar residues-rich tracts occupy residues 474–492 (AGTQ…GDTN) and 684–699 (KATA…SSAT).

It belongs to the TbpB family. Isotype II subfamily. In terms of assembly, binds only human holo-transferrin (TF), via the TF C-terminus. Forms a large complex with TbpA and TF. Interacts via its C-terminal domain with Slam1.

Its subcellular location is the cell outer membrane. It is found in the cell surface. Its function is as follows. Neisseria acquires iron by extracting it from serum transferrin (TF) in its human host. Acts as a TF receptor and is required for TF utilization. Involved in the initial capture of TF. Helps select only those TF molecules that can be used as an iron source and concentrates them on the cell surface, maintaining the iron-loaded status of the TF C-terminal lobe until its delivery to TbpA. The protein is Transferrin-binding protein B (tbpB) of Neisseria meningitidis serogroup B.